A 238-amino-acid chain; its full sequence is Ubiquinone biosynthesis O-methyltransferase (238 aa).

Arginine 38, glycine 58, aspartate 79, and methionine 124 together coordinate S-adenosyl-L-methionine.

This sequence belongs to the methyltransferase superfamily. UbiG/COQ3 family.

The enzyme catalyses a 3-demethylubiquinol + S-adenosyl-L-methionine = a ubiquinol + S-adenosyl-L-homocysteine + H(+). It carries out the reaction a 3-(all-trans-polyprenyl)benzene-1,2-diol + S-adenosyl-L-methionine = a 2-methoxy-6-(all-trans-polyprenyl)phenol + S-adenosyl-L-homocysteine + H(+). Its pathway is cofactor biosynthesis; ubiquinone biosynthesis. Its function is as follows. O-methyltransferase that catalyzes the 2 O-methylation steps in the ubiquinone biosynthetic pathway. The protein is Ubiquinone biosynthesis O-methyltransferase of Acinetobacter baylyi (strain ATCC 33305 / BD413 / ADP1).